The primary structure comprises 193 residues: MTALRLIVGLGNPGPEHAQTRHNAGFRFVDALIERSGARWALDSKLFGETAKVEVAGQPVWLLKPATFMNLSGKSITAALRFWKIEPEHLLVAHDELDLAPGTARLKFDGGHGGQNGLRDTIRLLGHGKFHRLRVGIGHPGHKDRVVPWVLGRAGREDDAAIGAAVDAAIDVLPLAMEGNFNEAMKRLHTEKK.

His17 contributes to the tRNA binding site. His22 acts as the Proton acceptor in catalysis. Residues Phe68, Asn70, and Asn116 each contribute to the tRNA site.

It belongs to the PTH family. In terms of assembly, monomer.

It is found in the cytoplasm. It catalyses the reaction an N-acyl-L-alpha-aminoacyl-tRNA + H2O = an N-acyl-L-amino acid + a tRNA + H(+). Its function is as follows. Hydrolyzes ribosome-free peptidyl-tRNAs (with 1 or more amino acids incorporated), which drop off the ribosome during protein synthesis, or as a result of ribosome stalling. Catalyzes the release of premature peptidyl moieties from peptidyl-tRNA molecules trapped in stalled 50S ribosomal subunits, and thus maintains levels of free tRNAs and 50S ribosomes. The polypeptide is Peptidyl-tRNA hydrolase (Xanthomonas axonopodis pv. citri (strain 306)).